A 140-amino-acid polypeptide reads, in one-letter code: L-fucose mutarotase (140 aa).

H22 (proton donor) is an active-site residue. Substrate-binding positions include D30, R107, and 129 to 131 (YGN).

This sequence belongs to the RbsD / FucU family. FucU mutarotase subfamily. In terms of assembly, homodecamer.

It localises to the cytoplasm. The catalysed reaction is alpha-L-fucose = beta-L-fucose. It functions in the pathway carbohydrate metabolism; L-fucose metabolism. Functionally, involved in the anomeric conversion of L-fucose. This chain is L-fucose mutarotase, found in Salmonella gallinarum (strain 287/91 / NCTC 13346).